Here is a 49-residue protein sequence, read N- to C-terminus: MVFLLFLSFVLSSIFLVPLVYMLNKVFLFNRNRVVNYDSIRKLALTRME.

Positions 1–22 are cleaved as a signal peptide; sequence MVFLLFLSFVLSSIFLVPLVYM.

It localises to the secreted. This is an uncharacterized protein from Dictyostelium discoideum (Social amoeba).